Here is a 443-residue protein sequence, read N- to C-terminus: Eukaryotic translation initiation factor 5 (443 aa).

29-36 is a GTP binding site; sequence GRGNGIKT. Residues 147 to 178 are compositionally biased toward basic and acidic residues; sequence PEVKKGSKDKKAMRRAEKERLKEGEAADEELK. Disordered regions lie at residues 147–244 and 271–293; these read PEVK…LTDT and EPEK…NSKN. Basic residues predominate over residues 179–188; it reads KVKKEVKKKG. Residues 207 to 227 are compositionally biased toward basic and acidic residues; the sequence is SGSDEDRRSPTHKQIEEKEEA. Positions 228 to 237 are enriched in acidic residues; that stretch reads KDEDDDDDDG. Residues 280-291 show a composition bias toward low complexity; it reads SNQNGGSQNGNS. Residues 284 to 443 enclose the W2 domain; it reads GGSQNGNSKN…QNAESESDEE (160 aa).

Belongs to the eIF-2-beta/eIF-5 family.

In terms of biological role, catalyzes the hydrolysis of GTP bound to the 40S ribosomal initiation complex (40S.mRNA.Met-tRNA[F].eIF-2.GTP) with the subsequent joining of a 60S ribosomal subunit resulting in the release of eIF-2 and the guanine nucleotide. The subsequent joining of a 60S ribosomal subunit results in the formation of a functional 80S initiation complex (80S.mRNA.Met-tRNA[F]). The sequence is that of Eukaryotic translation initiation factor 5 (EIF5) from Phaseolus vulgaris (Kidney bean).